The following is a 277-amino-acid chain: Indole-3-glycerol phosphate synthase (277 aa).

This sequence belongs to the TrpC family.

It carries out the reaction 1-(2-carboxyphenylamino)-1-deoxy-D-ribulose 5-phosphate + H(+) = (1S,2R)-1-C-(indol-3-yl)glycerol 3-phosphate + CO2 + H2O. It functions in the pathway amino-acid biosynthesis; L-tryptophan biosynthesis; L-tryptophan from chorismate: step 4/5. This chain is Indole-3-glycerol phosphate synthase, found in Pseudomonas putida (strain ATCC 47054 / DSM 6125 / CFBP 8728 / NCIMB 11950 / KT2440).